Reading from the N-terminus, the 77-residue chain is uncharacterized protein (77 aa).

The interval 56–77 (SVIPKQQPPSSAAAISESEFED) is disordered. A compositionally biased stretch (low complexity) spans 65–77 (SSAAAISESEFED).

This is an uncharacterized protein from Frog virus 3 (isolate Goorha) (FV-3).